The following is a 933-amino-acid chain: Protein translocase subunit SecA (933 aa).

Residues Gln87, 105–109 (GEGKT), and Asp515 contribute to the ATP site. Residues Cys917, Cys919, Cys928, and His929 each contribute to the Zn(2+) site.

The protein belongs to the SecA family. Monomer and homodimer. Part of the essential Sec protein translocation apparatus which comprises SecA, SecYEG and auxiliary proteins SecDF-YajC and YidC. The cofactor is Zn(2+).

The protein localises to the cell inner membrane. The protein resides in the cytoplasm. It carries out the reaction ATP + H2O + cellular proteinSide 1 = ADP + phosphate + cellular proteinSide 2.. In terms of biological role, part of the Sec protein translocase complex. Interacts with the SecYEG preprotein conducting channel. Has a central role in coupling the hydrolysis of ATP to the transfer of proteins into and across the cell membrane, serving both as a receptor for the preprotein-SecB complex and as an ATP-driven molecular motor driving the stepwise translocation of polypeptide chains across the membrane. This is Protein translocase subunit SecA from Burkholderia cenocepacia (strain ATCC BAA-245 / DSM 16553 / LMG 16656 / NCTC 13227 / J2315 / CF5610) (Burkholderia cepacia (strain J2315)).